A 196-amino-acid polypeptide reads, in one-letter code: Na(+)-translocating ferredoxin:NAD(+) oxidoreductase complex subunit E (196 aa).

Transmembrane regions (helical) follow at residues 38–58 (MGMG…ISAL), 68–88 (IPAF…LMKA), 92–112 (ALDA…IILA), 127–147 (FADA…LGSI), and 169–189 (VLLM…IGLI).

This sequence belongs to the NqrDE/RnfAE family. As to quaternary structure, the complex is composed of six subunits: RnfA, RnfB, RnfC, RnfD, RnfE and RnfG.

It is found in the cell membrane. It catalyses the reaction 2 reduced [2Fe-2S]-[ferredoxin] + Na(+)(in) + NAD(+) + H(+) = 2 oxidized [2Fe-2S]-[ferredoxin] + Na(+)(out) + NADH. Part of a membrane-bound complex that couples electron transfer with translocation of ions across the membrane. Couples electron transfer from reduced ferredoxin to NAD(+) with electrogenic movement of Na(+) out of the cell. Involved in caffeate respiration. This is Na(+)-translocating ferredoxin:NAD(+) oxidoreductase complex subunit E from Acetobacterium woodii (strain ATCC 29683 / DSM 1030 / JCM 2381 / KCTC 1655 / WB1).